The following is a 2258-amino-acid chain: Probable serine/threonine-protein kinase ifkA (2258 aa).

Disordered stretches follow at residues 43 to 108 and 189 to 308; these read RVNS…HQMG and EMNN…KEND. Positions 45–57 are enriched in low complexity; sequence NSSDDINNNNNNN. The segment covering 58-100 has biased composition (acidic residues); that stretch reads NDDDDDNDDYDDSDDENSDSDYDDYDDSDDENSDDEFYSDDED. Residues 191–301 show a composition bias toward low complexity; that stretch reads NNLTNSNNSN…NKELIDNNNN (111 aa). Residues 273–309 adopt a coiled-coil conformation; the sequence is NNNNNISNNKINKINNNNNNKELIDNNNNNKDKENDL. The Protein kinase 1 domain occupies 319–691; that stretch reads WKKGSCIERK…AGILLKHPFL (373 aa). Residues 325 to 333 and K348 each bind ATP; that span reads IERKSNYSV. Positions 358-398 are disordered; the sequence is SSSSLTSLSNSNNNNSNNNNNNNNNNNNNNNNNNNNNNNNN. Residues 359 to 398 are compositionally biased toward low complexity; that stretch reads SSSLTSLSNSNNNNSNNNNNNNNNNNNNNNNNNNNNNNNN. Catalysis depends on D498, which acts as the Proton acceptor. Disordered regions lie at residues 741-768 and 782-870; these read KSQT…NGSN and PLAT…MTPL. The span at 746–768 shows a compositional bias: low complexity; the sequence is NNNNDNNNLASSNELLSSSNGSN. Polar residues predominate over residues 782 to 791; it reads PLATSSSLDN. The segment covering 793–805 has biased composition (pro residues); that stretch reads TPPPSRPISPKPS. The segment covering 841 to 870 has biased composition (low complexity); sequence PQQNFNTPPTTTTTTTTPTATPTTPTMTPL. The Protein kinase 2 domain occupies 894–1482; it reads FEEIEMIGKG…TKQLLESGLL (589 aa). ATP contacts are provided by residues 900 to 908 and K923; that span reads IGKGGFGVV. The span at 1053 to 1094 shows a compositional bias: low complexity; that stretch reads TLSSSNTSSSSSLLSNNKSKILNTSKSTSTNTSTSTSTSNTN. The disordered stretch occupies residues 1053-1259; it reads TLSSSNTSSS…SSSRKKPPKE (207 aa). The segment covering 1095–1106 has biased composition (basic residues); it reads KNKKISKKKKSK. Low complexity predominate over residues 1156 to 1185; it reads NNNNNNDNNNNYHSDNESDSFSGSISMSDG. The segment covering 1206–1233 has biased composition (acidic residues); sequence DENENDDDDEEDDDDEYDEEDDDYETFD. Positions 1242 to 1251 are enriched in low complexity; the sequence is SNNSKLSTSS. The active-site Proton acceptor is the D1313. Disordered regions lie at residues 1343 to 1370 and 2048 to 2104; these read KSDD…TAQQ and GSGG…QQTS. The span at 1347–1368 shows a compositional bias: low complexity; it reads LNSSTSNTANNINLSSSTNSTA. Over residues 2048-2072 the composition is skewed to gly residues; the sequence is GSGGSGGSGGGSSMSSGGGGGGNSN. Positions 2085 to 2099 are enriched in low complexity; it reads SNQSTSSSGNSNNSN.

Belongs to the protein kinase superfamily. Ser/Thr protein kinase family.

It carries out the reaction L-seryl-[protein] + ATP = O-phospho-L-seryl-[protein] + ADP + H(+). It catalyses the reaction L-threonyl-[protein] + ATP = O-phospho-L-threonyl-[protein] + ADP + H(+). Phosphorylates eIF2-alpha, from 1 to 7 hours after the onset of development or during the preaggregation state, resulting in a shift from polysomes to free ribosomes for bulk mRNA. This is Probable serine/threonine-protein kinase ifkA (ifkA) from Dictyostelium discoideum (Social amoeba).